The following is a 147-amino-acid chain: NADPH-dependent 7-cyano-7-deazaguanine reductase (147 aa).

The interval methionine 1–tyrosine 23 is disordered. The active-site Thioimide intermediate is the cysteine 46. The active-site Proton donor is aspartate 53. Substrate is bound by residues valine 68–serine 70 and histidine 87–glutamate 88.

It belongs to the GTP cyclohydrolase I family. QueF type 1 subfamily.

It is found in the cytoplasm. The enzyme catalyses 7-aminomethyl-7-carbaguanine + 2 NADP(+) = 7-cyano-7-deazaguanine + 2 NADPH + 3 H(+). Its pathway is tRNA modification; tRNA-queuosine biosynthesis. In terms of biological role, catalyzes the NADPH-dependent reduction of 7-cyano-7-deazaguanine (preQ0) to 7-aminomethyl-7-deazaguanine (preQ1). This chain is NADPH-dependent 7-cyano-7-deazaguanine reductase, found in Zymomonas mobilis subsp. mobilis (strain ATCC 31821 / ZM4 / CP4).